A 176-amino-acid chain; its full sequence is Immunity factor for TNT homolog (176 aa).

As to quaternary structure, interacts with the tuberculosis necrotizing toxin (TNT) homolog, the C-terminal domain of the outer membrane channel protein CpnT.

In terms of biological role, antitoxin for tuberculosis necrotizing toxin (TNT) homolog. Acts by binding directly to TNT, which inhibits NAD(+) glycohydrolase activity of TNT and protects M.bovis from self-poisoning. The polypeptide is Immunity factor for TNT homolog (Mycobacterium bovis (strain BCG / Pasteur 1173P2)).